Consider the following 287-residue polypeptide: PPP2R1A-PPP2R2A-interacting phosphatase regulator 1 (287 aa).

Positions 1–44 are disordered; that stretch reads MAQEKMELDLELPPGTGGSPAEGGGSGGGGGLRRSNSAPLIHGL. Positions 15–32 are enriched in gly residues; it reads GTGGSPAEGGGSGGGGGL. Ser-35 is subject to Phosphoserine. Ser-37 carries the post-translational modification Phosphoserine; by CHEK1. A Phosphoserine modification is found at Ser-45. Thr-47 is modified (phosphothreonine). Phosphoserine occurs at positions 48, 62, and 76. Residue Lys-89 forms a Glycyl lysine isopeptide (Lys-Gly) (interchain with G-Cter in SUMO1) linkage. A phosphoserine mark is found at Ser-143 and Ser-147. Residue Thr-149 is modified to Phosphothreonine. 2 disordered regions span residues 167-189 and 236-287; these read SNGLPPSPIPSPTTRFTTRRSQS and GVCV…LSSK. 2 stretches are compositionally biased toward low complexity: residues 178 to 189 and 246 to 257; these read PTTRFTTRRSQS and GNSSSAGSSCNS. A phosphoserine mark is found at Ser-187 and Ser-189. Polar residues predominate over residues 259 to 270; the sequence is AKVSTTTDSPVS. Phosphoserine occurs at positions 267, 270, and 276.

It belongs to the FAM122 family. In terms of assembly, interacts with PPP2CA and PPP2R1A. Interacts (via its N-terminus) with PPP2R2A; the interaction is direct and this interaction inhibits PP2A activity. The CHEK1-mediated Ser-37 phosphorylated form interacts with 14-3-3 proteins. In terms of processing, CHEK1-mediated phosphorylation at Ser-37 negatively regulates its ability to inhibit serine/threonine-protein phosphatase 2A (PP2A) activity. Phosphorylation leads to its release from the PP2A complex and its sequestration by 14-3-3 proteins in the cytoplasm resulting in its inability to translocate to the nucleus, where it otherwise inhibits PP2A.

The protein resides in the nucleus. It is found in the cytoplasm. In terms of biological role, acts as an inhibitor of serine/threonine-protein phosphatase 2A (PP2A) activity. Inhibits PP2A activity by blocking the substrate binding site on PPP2R2A and the active site of PPP2CA. Potentiates ubiquitin-mediated proteasomal degradation of serine/threonine-protein phosphatase 2A catalytic subunit alpha (PPP2CA). Inhibits PP2A-mediated dephosphorylation of WEE1, promoting ubiquitin-mediated proteolysis of WEE1, thereby releasing G2/M checkpoint. The chain is PPP2R1A-PPP2R2A-interacting phosphatase regulator 1 from Homo sapiens (Human).